The primary structure comprises 492 residues: 3-octaprenyl-4-hydroxybenzoate carboxy-lyase (492 aa).

Asparagine 175 lines the Mn(2+) pocket. Prenylated FMN contacts are provided by residues isoleucine 178–arginine 180, arginine 192–leucine 194, and arginine 197–glycine 198. A Mn(2+)-binding site is contributed by glutamate 241. Residue aspartate 290 is the Proton donor of the active site.

The protein belongs to the UbiD family. In terms of assembly, homohexamer. Requires prenylated FMN as cofactor. It depends on Mn(2+) as a cofactor.

It is found in the cell membrane. The catalysed reaction is a 4-hydroxy-3-(all-trans-polyprenyl)benzoate + H(+) = a 2-(all-trans-polyprenyl)phenol + CO2. It participates in cofactor biosynthesis; ubiquinone biosynthesis. Functionally, catalyzes the decarboxylation of 3-octaprenyl-4-hydroxy benzoate to 2-octaprenylphenol, an intermediate step in ubiquinone biosynthesis. The sequence is that of 3-octaprenyl-4-hydroxybenzoate carboxy-lyase from Salmonella typhi.